A 300-amino-acid chain; its full sequence is Probable membrane transporter protein YtnM (300 aa).

8 helical membrane passes run 4–24 (LIVFAFIGLLSQLIDGSLGMA), 33–53 (LLAFGITPAVASASVHLAEVV), 76–96 (LVIPGSIGAFLGAAFLSQLPG), 102–122 (YISLFLLLLGGYVLIRFLFQY), 139–159 (IPLGVIAGFADATGGGGWGPV), 206–226 (LWVFSLMAGGIIAAPIAAWLV), 231–251 (PQLMGVLVGGFIILVNARTLI), and 260–280 (VHPLIYTAIGAIWLSAVLFVL).

This sequence belongs to the 4-toluene sulfonate uptake permease (TSUP) (TC 2.A.102) family.

The protein localises to the cell membrane. The protein is Probable membrane transporter protein YtnM (ytnM) of Bacillus subtilis (strain 168).